The following is a 1211-amino-acid chain: Endoplasmic reticulum transmembrane helix translocase (1211 aa).

Topologically, residues 1-23 (MGSKALITSPDISSGQLYIKLPT) are cytoplasmic. Residues 24–44 (FFHLYVWPFALFVYPYIGYVY) form a helical membrane-spanning segment. The Lumenal portion of the chain corresponds to 45 to 54 (QNKLYSEEVR). The helical transmembrane segment at 55 to 75 (YLTYIAVGTIHALFWLAGEWN) threads the bilayer. The Cytoplasmic segment spans residues 76-191 (TKVYCLMTCR…FDIPIPTFGT (116 aa)). The A-domain; part 1 stretch occupies residues 155–185 (TIGTLKKSTGLTNIQSEIFLYRYGKNCFDIP). The chain crosses the membrane as a helical span at residues 192-212 (LFKEHAVAPFFVFQIFCCVLW). The Lumenal portion of the chain corresponds to 213-216 (CLDD). The chain crosses the membrane as a helical span at residues 217–237 (YWYFSLFSMFMIIALECSVVW). At 238–397 (QRQRTLTEFR…EKVTANNRES (160 aa)) the chain is on the cytoplasmic side. An A-domain; part 2 region spans residues 250 to 388 (SIKPYEIQVY…LVRTMVFSSE (139 aa)). Residues 398–418 (LYFILFLLVFAIAASGYVWHV) form a helical membrane-spanning segment. Residues 419-1057 (GSKTERSRYK…KERPQAGIFN (639 aa)) are Lumenal-facing. A P-domain; part 1 region spans residues 464 to 493 (YIYCTEPFRIPLSGHLDICCFDKTGTLTEE). Asp-485 functions as the 4-aspartylphosphate intermediate in the catalytic mechanism. 2 residues coordinate Mg(2+): Asp-485 and Thr-487. ATP is bound by residues 485–487 (DKT), Phe-587, Arg-644, Asp-710, and 824–828 (DGTND). The interval 495 to 685 (MVVQGIAGVN…FAGFLIFTSP (191 aa)) is N-domain. Residues 688–845 (EDARQTVQML…HVGVALLNAS (158 aa)) are P-domain; part 2. Asp-824 serves as a coordination point for Mg(2+). The tract at residues 846-955 (EEDMLEMQER…NASDDEAPKL (110 aa)) is arm-like. Residues 956-971 (KLGDASVAAPFTSKLA) are P-domain; part 3. The helical transmembrane segment at 1058 to 1078 (TYIIGSVLGQFAIHIVTLIYI) threads the bilayer. At 1079-1100 (TRVVYLYEDPLEKVDLEETFKP) the chain is on the cytoplasmic side. The helical transmembrane segment at 1101–1121 (SLLNTAIYLLQLIQQVSTFAI) threads the bilayer. Residues 1122-1136 (NYQGRPFREALSENK) lie on the Lumenal side of the membrane. The chain crosses the membrane as a helical span at residues 1137–1157 (GMYYGLLGIAFVAIAGVTEFS). The Cytoplasmic segment spans residues 1158 to 1174 (PELNAKLQLVKMAYNFQ). A helical transmembrane segment spans residues 1175–1195 (IQLLATMVVDYAACWIIEELM). Residues 1196–1211 (KKYFRDNKPKEIVLRN) are Lumenal-facing.

It belongs to the cation transport ATPase (P-type) (TC 3.A.3) family. Type V subfamily. Mg(2+) serves as cofactor.

The protein resides in the endoplasmic reticulum membrane. The enzyme catalyses [protein]-with a C-terminal TM segment(out) + ATP + H2O = [protein]-with a C-terminal TM segment(in) + ADP + phosphate + H(+). Endoplasmic reticulum translocase required to remove mitochondrial transmembrane proteins mistargeted to the endoplasmic reticulum. Acts as a dislocase that mediates the ATP-dependent extraction of mislocalized mitochondrial transmembrane proteins from the endoplasmic reticulum membrane. Specifically binds mitochondrial tail-anchored transmembrane proteins: has an atypically large substrate-binding pocket that recognizes and binds moderately hydrophobic transmembranes with short hydrophilic lumenal domains. Involved in controlling nuclear calcium ion levels. Required for cytokinesis and stabilizing microtubules. Required for assembly of the forespore membrane. Involved in calcium transport to the endoplasmic reticulum. In Schizosaccharomyces pombe (strain 972 / ATCC 24843) (Fission yeast), this protein is Endoplasmic reticulum transmembrane helix translocase.